We begin with the raw amino-acid sequence, 305 residues long: MSFTVQVKEELLLQSSQNKSELSAIIKLSGSLGLASSGLTLSISTENAKIARHIYELLLHFYQIKAEIRHHQKPNLKKNRVYAVLIEDGVNEILNDLHLADSFFGLETGISPLVLENDSWSQAYLRGAFLAAGSVKDPEKGKYQLEIASVYSDHANDLANLMQKFLLDAKVIERSKGTITYLQRAEDIMDFLLVIGAEETKTEFENVKLLREARNDLNRATNAEAANIAKTVNASMKTINNIIKIMDTIGLDQLSGDLQEIAQLRIQHPDYSIQQLADSLTVPITKSGVNHRLRKINKIADELTD.

A DNA-binding region (H-T-H motif) is located at residues 272 to 305 (SIQQLADSLTVPITKSGVNHRLRKINKIADELTD).

Belongs to the WhiA family.

Involved in cell division and chromosome segregation. The polypeptide is Probable cell division protein WhiA (Streptococcus suis (strain 98HAH33)).